Here is a 413-residue protein sequence, read N- to C-terminus: Precorrin-6Y C(5,15)-methyltransferase [decarboxylating] (413 aa).

It belongs to the precorrin methyltransferase family.

It carries out the reaction precorrin-6B + 2 S-adenosyl-L-methionine = precorrin-8X + 2 S-adenosyl-L-homocysteine + CO2 + 3 H(+). It functions in the pathway cofactor biosynthesis; adenosylcobalamin biosynthesis; cob(II)yrinate a,c-diamide from precorrin-2 (aerobic route): step 7/10. In terms of biological role, catalyzes the methylation of both C-5 and C-15 in precorrin-6Y to form precorrin-8X. The sequence is that of Precorrin-6Y C(5,15)-methyltransferase [decarboxylating] (cobL) from Sinorhizobium sp.